Here is a 360-residue protein sequence, read N- to C-terminus: GTPase Obg (360 aa).

The region spanning 1 to 156 is the Obg domain; that stretch reads MFVDSVEIII…KCVRLELKLI (156 aa). Residues 157–360 form the OBG-type G domain; it reads ADIGLVGFPN…LKFVLLKALP (204 aa). GTP is bound by residues 163–170, 188–192, 210–213, 279–282, and 341–343; these read GFPNAGKS, FTTLV, DIPG, NKCD, and SAV. Serine 170 and threonine 190 together coordinate Mg(2+).

The protein belongs to the TRAFAC class OBG-HflX-like GTPase superfamily. OBG GTPase family. As to quaternary structure, monomer. Requires Mg(2+) as cofactor.

It localises to the cytoplasm. An essential GTPase which binds GTP, GDP and possibly (p)ppGpp with moderate affinity, with high nucleotide exchange rates and a fairly low GTP hydrolysis rate. Plays a role in control of the cell cycle, stress response, ribosome biogenesis and in those bacteria that undergo differentiation, in morphogenesis control. In Helicobacter pylori (strain G27), this protein is GTPase Obg.